We begin with the raw amino-acid sequence, 154 residues long: Peptide methionine sulfoxide reductase MsrB (154 aa).

A MsrB domain is found at 28 to 150; it reads DQQWREQLSE…NSVSLIFNKI (123 aa). Zn(2+) contacts are provided by Cys-67, Cys-70, Cys-116, and Cys-119. Cys-139 functions as the Nucleophile in the catalytic mechanism.

Belongs to the MsrB Met sulfoxide reductase family. Zn(2+) serves as cofactor.

The catalysed reaction is L-methionyl-[protein] + [thioredoxin]-disulfide + H2O = L-methionyl-(R)-S-oxide-[protein] + [thioredoxin]-dithiol. The sequence is that of Peptide methionine sulfoxide reductase MsrB from Vibrio vulnificus (strain YJ016).